A 204-amino-acid chain; its full sequence is Pyridoxal 5'-phosphate synthase subunit PdxT (204 aa).

An L-glutamine-binding site is contributed by 52–54 (GES). The active-site Nucleophile is the Cys-84. L-glutamine-binding positions include Arg-116 and 143–144 (IR). Catalysis depends on charge relay system residues His-184 and Glu-186.

This sequence belongs to the glutaminase PdxT/SNO family. As to quaternary structure, in the presence of PdxS, forms a dodecamer of heterodimers. Only shows activity in the heterodimer.

It carries out the reaction aldehydo-D-ribose 5-phosphate + D-glyceraldehyde 3-phosphate + L-glutamine = pyridoxal 5'-phosphate + L-glutamate + phosphate + 3 H2O + H(+). The catalysed reaction is L-glutamine + H2O = L-glutamate + NH4(+). It functions in the pathway cofactor biosynthesis; pyridoxal 5'-phosphate biosynthesis. Catalyzes the hydrolysis of glutamine to glutamate and ammonia as part of the biosynthesis of pyridoxal 5'-phosphate. The resulting ammonia molecule is channeled to the active site of PdxS. The polypeptide is Pyridoxal 5'-phosphate synthase subunit PdxT (Pyrobaculum arsenaticum (strain DSM 13514 / JCM 11321 / PZ6)).